The sequence spans 1477 residues: Ring canal kelch protein (1477 aa).

Disordered stretches follow at residues L19–G62, L76–G96, and S108–E137. The segment covering S20 to N46 has biased composition (low complexity). S108 and S111 each carry phosphoserine. The BTB domain occupies C157 to E223. Kelch repeat units lie at residues I404–D449, K450–G496, I498–G543, L545–N592, L594–G639, and L641–K687. Position 690 (U690) is a non-standard amino acid, selenocysteine. Disordered stretches follow at residues P744–I841, H1119–T1200, R1291–D1326, P1359–K1416, and P1446–D1477. Low complexity-rich tracts occupy residues A763–N813 and A820–Q839. The segment covering I1125 to T1137 has biased composition (polar residues). Residues K1166 to S1192 show a composition bias toward low complexity. Composition is skewed to low complexity over residues Q1374–Q1391 and T1456–D1477.

As to expression, both proteins are expressed in ovaries, male testis, ovariectomized females, cuticle, salivary gland and imaginal disks. Kelch short protein is the predominant form and is also expressed in fat bodies. On entry into metamorphosis levels of full-length protein increase in testis and imaginal disks.

The protein resides in the cytoplasm. It localises to the cytoskeleton. Component of ring canals that regulates the flow of cytoplasm between cells. May be involved in the regulation of cytoplasm flow from nurse cells to the oocyte during oogenesis. Binds actin. This is Ring canal kelch protein (kel) from Drosophila melanogaster (Fruit fly).